The following is a 622-amino-acid chain: Chaperone protein HscA homolog (622 aa).

It belongs to the heat shock protein 70 family.

Functionally, chaperone involved in the maturation of iron-sulfur cluster-containing proteins. Has a low intrinsic ATPase activity which is markedly stimulated by HscB. This chain is Chaperone protein HscA homolog, found in Verminephrobacter eiseniae (strain EF01-2).